Here is a 159-residue protein sequence, read N- to C-terminus: 16 kDa outer membrane lipoprotein (159 aa).

Residues 1–21 form the signal peptide; that stretch reads MNKKIFTLFLVVAASAIFAVS. Cys-22 carries N-palmitoyl cysteine lipidation. Residue Cys-22 is the site of S-diacylglycerol cysteine attachment.

The protein localises to the cell outer membrane. This chain is 16 kDa outer membrane lipoprotein (smpA), found in Brachyspira hyodysenteriae (Treponema hyodysenteriae).